Here is a 730-residue protein sequence, read N- to C-terminus: Elongation factor 2 (730 aa).

One can recognise a tr-type G domain in the interval 19–260 (QRIRNIGIVA…MVIHFLPNPL (242 aa)). GTP-binding positions include 28 to 35 (AHIDHGKT), 94 to 98 (DTPGH), and 148 to 151 (NKVD). At histidine 596 the chain carries Diphthamide.

Belongs to the TRAFAC class translation factor GTPase superfamily. Classic translation factor GTPase family. EF-G/EF-2 subfamily.

The protein resides in the cytoplasm. In terms of biological role, catalyzes the GTP-dependent ribosomal translocation step during translation elongation. During this step, the ribosome changes from the pre-translocational (PRE) to the post-translocational (POST) state as the newly formed A-site-bound peptidyl-tRNA and P-site-bound deacylated tRNA move to the P and E sites, respectively. Catalyzes the coordinated movement of the two tRNA molecules, the mRNA and conformational changes in the ribosome. In Methanosarcina mazei (strain ATCC BAA-159 / DSM 3647 / Goe1 / Go1 / JCM 11833 / OCM 88) (Methanosarcina frisia), this protein is Elongation factor 2.